Consider the following 426-residue polypeptide: Glutamate-1-semialdehyde 2,1-aminomutase (426 aa).

K263 carries the N6-(pyridoxal phosphate)lysine modification.

The protein belongs to the class-III pyridoxal-phosphate-dependent aminotransferase family. HemL subfamily. As to quaternary structure, homodimer. Requires pyridoxal 5'-phosphate as cofactor.

The protein localises to the cytoplasm. The enzyme catalyses (S)-4-amino-5-oxopentanoate = 5-aminolevulinate. It functions in the pathway porphyrin-containing compound metabolism; protoporphyrin-IX biosynthesis; 5-aminolevulinate from L-glutamyl-tRNA(Glu): step 2/2. This Dichelobacter nodosus (strain VCS1703A) protein is Glutamate-1-semialdehyde 2,1-aminomutase.